The following is a 166-amino-acid chain: Endoribonuclease YbeY (166 aa).

3 residues coordinate Zn(2+): H132, H136, and H142.

The protein belongs to the endoribonuclease YbeY family. Zn(2+) serves as cofactor.

Its subcellular location is the cytoplasm. Functionally, single strand-specific metallo-endoribonuclease involved in late-stage 70S ribosome quality control and in maturation of the 3' terminus of the 16S rRNA. In Clostridium botulinum (strain Eklund 17B / Type B), this protein is Endoribonuclease YbeY.